We begin with the raw amino-acid sequence, 513 residues long: Activin receptor type-2A (513 aa).

Residues 1 to 19 (MGAATKLAFAVFLISCSSG) form the signal peptide. Over 20-139 (AILGRSETQE…VTPKPPLFNT (120 aa)) the chain is Extracellular. Intrachain disulfides connect Cys-30-Cys-60, Cys-50-Cys-78, Cys-85-Cys-104, Cys-91-Cys-103, and Cys-105-Cys-110. Asn-43 and Asn-66 each carry an N-linked (GlcNAc...) asparagine glycan. Residues 140–160 (LLYSLVPIMGIAVIVLFSFWM) traverse the membrane as a helical segment. Over 161-513 (YRHHKLAYPP…VDFPPKESSL (353 aa)) the chain is Cytoplasmic. The 294-residue stretch at 192–485 (LQLLEIKARG…EERIIQMQKL (294 aa)) folds into the Protein kinase domain. Residues 198–206 (KARGRFGCV) and Lys-219 contribute to the ATP site. Residue Asp-322 is the Proton acceptor of the active site.

It belongs to the protein kinase superfamily. TKL Ser/Thr protein kinase family. TGFB receptor subfamily. Mg(2+) serves as cofactor. Requires Mn(2+) as cofactor. Expressed in hen anterior pituitary during the ovulatory cycle and in the ovarian follicle.

Its subcellular location is the cell membrane. The catalysed reaction is L-threonyl-[receptor-protein] + ATP = O-phospho-L-threonyl-[receptor-protein] + ADP + H(+). It catalyses the reaction L-seryl-[receptor-protein] + ATP = O-phospho-L-seryl-[receptor-protein] + ADP + H(+). Its function is as follows. On ligand binding, forms a receptor complex consisting of two type II and two type I transmembrane serine/threonine kinases. Type II receptors phosphorylate and activate type I receptors which autophosphorylate, then bind and activate SMAD transcriptional regulators. Receptor for activin A, activin B and inhibin A. May modulate neuropeptide expression in dorsal root ganglia (DRG) neurons and ovarian follicle development. The sequence is that of Activin receptor type-2A (ACVR2A) from Gallus gallus (Chicken).